Here is a 284-residue protein sequence, read N- to C-terminus: Homoserine O-acetyltransferase 2 (284 aa).

Residue C133 is the Acyl-thioester intermediate of the active site. The substrate site is built by K154 and S178. The active-site Proton acceptor is H220. E222 is a catalytic residue. A substrate-binding site is contributed by R234.

The protein belongs to the MetA family.

The protein resides in the cytoplasm. The catalysed reaction is L-homoserine + acetyl-CoA = O-acetyl-L-homoserine + CoA. Its pathway is amino-acid biosynthesis; L-methionine biosynthesis via de novo pathway; O-acetyl-L-homoserine from L-homoserine: step 1/1. Its function is as follows. Transfers an acetyl group from acetyl-CoA to L-homoserine, forming acetyl-L-homoserine. The protein is Homoserine O-acetyltransferase 2 of Ilyobacter polytropus (strain ATCC 51220 / DSM 2926 / LMG 16218 / CuHBu1).